The primary structure comprises 217 residues: 3,4-dihydroxy-2-butanone 4-phosphate synthase (217 aa).

D-ribulose 5-phosphate is bound by residues 37–38 (RE), Asp-42, 150–154 (RRGHT), and Glu-174. Position 38 (Glu-38) interacts with Mg(2+). Position 153 (His-153) interacts with Mg(2+).

It belongs to the DHBP synthase family. As to quaternary structure, homodimer. Mg(2+) serves as cofactor. It depends on Mn(2+) as a cofactor.

It catalyses the reaction D-ribulose 5-phosphate = (2S)-2-hydroxy-3-oxobutyl phosphate + formate + H(+). It functions in the pathway cofactor biosynthesis; riboflavin biosynthesis; 2-hydroxy-3-oxobutyl phosphate from D-ribulose 5-phosphate: step 1/1. Its function is as follows. Catalyzes the conversion of D-ribulose 5-phosphate to formate and 3,4-dihydroxy-2-butanone 4-phosphate. This chain is 3,4-dihydroxy-2-butanone 4-phosphate synthase, found in Shewanella oneidensis (strain ATCC 700550 / JCM 31522 / CIP 106686 / LMG 19005 / NCIMB 14063 / MR-1).